The following is a 187-amino-acid chain: TATA-box-binding protein (187 aa).

2 consecutive repeat copies span residues 10-86 and 101-179.

This sequence belongs to the TBP family.

General factor that plays a role in the activation of archaeal genes transcribed by RNA polymerase. Binds specifically to the TATA box promoter element which lies close to the position of transcription initiation. This chain is TATA-box-binding protein, found in Natronomonas pharaonis (strain ATCC 35678 / DSM 2160 / CIP 103997 / JCM 8858 / NBRC 14720 / NCIMB 2260 / Gabara) (Halobacterium pharaonis).